A 393-amino-acid polypeptide reads, in one-letter code: Phosphoglycerate kinase (393 aa).

Substrate-binding positions include 21–23 (DLN), R36, 59–62 (HLGR), R114, and R147. Residues K198, E320, and 346-349 (GGDT) contribute to the ATP site.

The protein belongs to the phosphoglycerate kinase family. In terms of assembly, monomer.

It is found in the cytoplasm. It catalyses the reaction (2R)-3-phosphoglycerate + ATP = (2R)-3-phospho-glyceroyl phosphate + ADP. Its pathway is carbohydrate degradation; glycolysis; pyruvate from D-glyceraldehyde 3-phosphate: step 2/5. The chain is Phosphoglycerate kinase from Methylobacillus flagellatus (strain ATCC 51484 / DSM 6875 / VKM B-1610 / KT).